Consider the following 693-residue polypeptide: Elongation factor G (693 aa).

The tr-type G domain maps to 8–282 (EKTRNIGIMA…AVIDYLPSPL (275 aa)). Residues 17 to 24 (AHVDAGKT), 81 to 85 (DTPGH), and 135 to 138 (NKMD) contribute to the GTP site.

This sequence belongs to the TRAFAC class translation factor GTPase superfamily. Classic translation factor GTPase family. EF-G/EF-2 subfamily.

Its subcellular location is the cytoplasm. Its function is as follows. Catalyzes the GTP-dependent ribosomal translocation step during translation elongation. During this step, the ribosome changes from the pre-translocational (PRE) to the post-translocational (POST) state as the newly formed A-site-bound peptidyl-tRNA and P-site-bound deacylated tRNA move to the P and E sites, respectively. Catalyzes the coordinated movement of the two tRNA molecules, the mRNA and conformational changes in the ribosome. The protein is Elongation factor G of Streptococcus pneumoniae serotype 2 (strain D39 / NCTC 7466).